The chain runs to 359 residues: Cytohesin-interacting protein (359 aa).

The PDZ domain maps to 77–166 (LVTVEKQDNE…LLTIETLNGT (90 aa)). The interval 166 to 188 (TMILKRTELEAKLQVLKQTLKQK) is interaction with CYTH1. Positions 166-188 (TMILKRTELEAKLQVLKQTLKQK) form a coiled coil.

As to quaternary structure, interacts with CYTH1 and SNX27. Expressed in lymph nodes, thymus, spleen, lung, peripheral blood leukocytes and bone marrow.

The protein resides in the cytoplasm. It is found in the early endosome. Functionally, by its binding to cytohesin-1 (CYTH1), it modifies activation of ARFs by CYTH1 and its precise function may be to sequester CYTH1 in the cytoplasm. This Homo sapiens (Human) protein is Cytohesin-interacting protein (CYTIP).